The chain runs to 88 residues: UPF0297 protein SAK_2030 (88 aa).

The protein belongs to the UPF0297 family.

In Streptococcus agalactiae serotype Ia (strain ATCC 27591 / A909 / CDC SS700), this protein is UPF0297 protein SAK_2030.